A 217-amino-acid chain; its full sequence is ATP phosphoribosyltransferase (217 aa).

The protein belongs to the ATP phosphoribosyltransferase family. Short subfamily. In terms of assembly, heteromultimer composed of HisG and HisZ subunits.

The protein localises to the cytoplasm. The enzyme catalyses 1-(5-phospho-beta-D-ribosyl)-ATP + diphosphate = 5-phospho-alpha-D-ribose 1-diphosphate + ATP. It functions in the pathway amino-acid biosynthesis; L-histidine biosynthesis; L-histidine from 5-phospho-alpha-D-ribose 1-diphosphate: step 1/9. Functionally, catalyzes the condensation of ATP and 5-phosphoribose 1-diphosphate to form N'-(5'-phosphoribosyl)-ATP (PR-ATP). Has a crucial role in the pathway because the rate of histidine biosynthesis seems to be controlled primarily by regulation of HisG enzymatic activity. The protein is ATP phosphoribosyltransferase of Burkholderia orbicola (strain AU 1054).